We begin with the raw amino-acid sequence, 322 residues long: Aspartate carbamoyltransferase catalytic subunit (322 aa).

2 residues coordinate carbamoyl phosphate: R65 and T66. K93 contacts L-aspartate. Residues R115, H143, and Q146 each contribute to the carbamoyl phosphate site. The L-aspartate site is built by R176 and R230. Positions 271 and 272 each coordinate carbamoyl phosphate.

It belongs to the aspartate/ornithine carbamoyltransferase superfamily. ATCase family. In terms of assembly, heterododecamer (2C3:3R2) of six catalytic PyrB chains organized as two trimers (C3), and six regulatory PyrI chains organized as three dimers (R2).

It catalyses the reaction carbamoyl phosphate + L-aspartate = N-carbamoyl-L-aspartate + phosphate + H(+). It functions in the pathway pyrimidine metabolism; UMP biosynthesis via de novo pathway; (S)-dihydroorotate from bicarbonate: step 2/3. Functionally, catalyzes the condensation of carbamoyl phosphate and aspartate to form carbamoyl aspartate and inorganic phosphate, the committed step in the de novo pyrimidine nucleotide biosynthesis pathway. The chain is Aspartate carbamoyltransferase catalytic subunit from Brucella canis (strain ATCC 23365 / NCTC 10854 / RM-666).